A 376-amino-acid polypeptide reads, in one-letter code: Succinyl-diaminopimelate desuccinylase (376 aa).

Residue His66 coordinates Zn(2+). Asp68 is an active-site residue. Asp99 contributes to the Zn(2+) binding site. Glu133 acts as the Proton acceptor in catalysis. Residues Glu134, Glu162, and His349 each coordinate Zn(2+).

Belongs to the peptidase M20A family. DapE subfamily. Homodimer. Zn(2+) is required as a cofactor. Co(2+) serves as cofactor.

The enzyme catalyses N-succinyl-(2S,6S)-2,6-diaminopimelate + H2O = (2S,6S)-2,6-diaminopimelate + succinate. It functions in the pathway amino-acid biosynthesis; L-lysine biosynthesis via DAP pathway; LL-2,6-diaminopimelate from (S)-tetrahydrodipicolinate (succinylase route): step 3/3. Catalyzes the hydrolysis of N-succinyl-L,L-diaminopimelic acid (SDAP), forming succinate and LL-2,6-diaminopimelate (DAP), an intermediate involved in the bacterial biosynthesis of lysine and meso-diaminopimelic acid, an essential component of bacterial cell walls. This is Succinyl-diaminopimelate desuccinylase from Ruthia magnifica subsp. Calyptogena magnifica.